A 190-amino-acid polypeptide reads, in one-letter code: Elongation factor P-like protein (190 aa).

This sequence belongs to the elongation factor P family.

The protein is Elongation factor P-like protein of Pectobacterium atrosepticum (strain SCRI 1043 / ATCC BAA-672) (Erwinia carotovora subsp. atroseptica).